We begin with the raw amino-acid sequence, 146 residues long: MGNRLIRSYLPNTVMSIEDKQNKYNETIEDSKICNKVYIKQSGKIDKQELTRIKKLGFFYSQKSDHEIERMLFSMPNGTFLLTDDATNENIFIVQKDLENGSLNIAKLEFKGKALYINGKDYYSLENYLKTFEDFYKYPLIYNKNK.

Belongs to the asfivirus MGF 100 family.

In terms of biological role, plays a role in virus cell tropism, and may be required for efficient virus replication in macrophages. This Ornithodoros (relapsing fever ticks) protein is Protein MGF 100-3L.